Here is a 198-residue protein sequence, read N- to C-terminus: Translation machinery-associated protein 22 (198 aa).

Positions 100-171 (IIIKRSERTK…EIVEMIRQQV (72 aa)) constitute an SUI1 domain.

This sequence belongs to the DENR family. As to quaternary structure, interacts with the 40S ribosomal subunit.

The protein resides in the cytoplasm. The chain is Translation machinery-associated protein 22 (TMA22) from Cryptococcus neoformans var. neoformans serotype D (strain B-3501A) (Filobasidiella neoformans).